We begin with the raw amino-acid sequence, 382 residues long: Alkanesulfonate monooxygenase (382 aa).

The protein belongs to the SsuD family. Homotetramer.

The enzyme catalyses an alkanesulfonate + FMNH2 + O2 = an aldehyde + FMN + sulfite + H2O + 2 H(+). In terms of biological role, catalyzes the desulfonation of aliphatic sulfonates. The protein is Alkanesulfonate monooxygenase of Yersinia pseudotuberculosis serotype O:1b (strain IP 31758).